Here is a 508-residue protein sequence, read N- to C-terminus: Light-independent protochlorophyllide reductase subunit B (508 aa).

Residue aspartate 36 participates in [4Fe-4S] cluster binding. The active-site Proton donor is aspartate 294. Position 429 to 430 (429 to 430 (GM)) interacts with substrate.

The protein belongs to the ChlB/BchB/BchZ family. In terms of assembly, protochlorophyllide reductase is composed of three subunits; ChlL, ChlN and ChlB. Forms a heterotetramer of two ChlB and two ChlN subunits. Requires [4Fe-4S] cluster as cofactor.

It catalyses the reaction chlorophyllide a + oxidized 2[4Fe-4S]-[ferredoxin] + 2 ADP + 2 phosphate = protochlorophyllide a + reduced 2[4Fe-4S]-[ferredoxin] + 2 ATP + 2 H2O. Its pathway is porphyrin-containing compound metabolism; chlorophyll biosynthesis (light-independent). Component of the dark-operative protochlorophyllide reductase (DPOR) that uses Mg-ATP and reduced ferredoxin to reduce ring D of protochlorophyllide (Pchlide) to form chlorophyllide a (Chlide). This reaction is light-independent. The NB-protein (ChlN-ChlB) is the catalytic component of the complex. In Synechocystis sp. (strain ATCC 27184 / PCC 6803 / Kazusa), this protein is Light-independent protochlorophyllide reductase subunit B.